Consider the following 316-residue polypeptide: Acetyl-coenzyme A carboxylase carboxyl transferase subunit alpha (316 aa).

Residues Glu35–Asp292 form the CoA carboxyltransferase C-terminal domain.

It belongs to the AccA family. Acetyl-CoA carboxylase is a heterohexamer composed of biotin carboxyl carrier protein (AccB), biotin carboxylase (AccC) and two subunits each of ACCase subunit alpha (AccA) and ACCase subunit beta (AccD).

Its subcellular location is the cytoplasm. The catalysed reaction is N(6)-carboxybiotinyl-L-lysyl-[protein] + acetyl-CoA = N(6)-biotinyl-L-lysyl-[protein] + malonyl-CoA. The protein operates within lipid metabolism; malonyl-CoA biosynthesis; malonyl-CoA from acetyl-CoA: step 1/1. Its function is as follows. Component of the acetyl coenzyme A carboxylase (ACC) complex. First, biotin carboxylase catalyzes the carboxylation of biotin on its carrier protein (BCCP) and then the CO(2) group is transferred by the carboxyltransferase to acetyl-CoA to form malonyl-CoA. In Alkaliphilus oremlandii (strain OhILAs) (Clostridium oremlandii (strain OhILAs)), this protein is Acetyl-coenzyme A carboxylase carboxyl transferase subunit alpha.